Reading from the N-terminus, the 127-residue chain is Cytochrome b-c1 complex subunit 7, mitochondrial (127 aa).

Belongs to the UQCRB/QCR7 family. Component of the ubiquinol-cytochrome c oxidoreductase (cytochrome b-c1 complex, complex III, CIII), a multisubunit enzyme composed of 10 subunits. The complex is composed of 3 respiratory subunits cytochrome b (COB), cytochrome c1 (CYT1) and Rieske protein (RIP1), 2 core protein subunits COR1 and QCR2, and 5 low-molecular weight protein subunits QCR6, QCR7, QCR8, QCR9 and QCR10. The complex exists as an obligatory dimer and forms supercomplexes (SCs) in the inner mitochondrial membrane with a monomer or a dimer of cytochrome c oxidase (complex IV, CIV), resulting in 2 different assemblies (supercomplexes III(2)IV and III(2)IV(2)).

It is found in the mitochondrion inner membrane. Its function is as follows. Component of the ubiquinol-cytochrome c oxidoreductase, a multisubunit transmembrane complex that is part of the mitochondrial electron transport chain which drives oxidative phosphorylation. Plays an important role in the uptake of multiple carbon sources such acetate, lactate, amino acids or GlcNAc present in different host niches. The chain is Cytochrome b-c1 complex subunit 7, mitochondrial from Candida albicans (strain SC5314 / ATCC MYA-2876) (Yeast).